A 318-amino-acid polypeptide reads, in one-letter code: Methionyl-tRNA formyltransferase (318 aa).

112 to 115 (SLLP) is a binding site for (6S)-5,6,7,8-tetrahydrofolate.

Belongs to the Fmt family.

The catalysed reaction is L-methionyl-tRNA(fMet) + (6R)-10-formyltetrahydrofolate = N-formyl-L-methionyl-tRNA(fMet) + (6S)-5,6,7,8-tetrahydrofolate + H(+). Attaches a formyl group to the free amino group of methionyl-tRNA(fMet). The formyl group appears to play a dual role in the initiator identity of N-formylmethionyl-tRNA by promoting its recognition by IF2 and preventing the misappropriation of this tRNA by the elongation apparatus. The sequence is that of Methionyl-tRNA formyltransferase from Citrifermentans bemidjiense (strain ATCC BAA-1014 / DSM 16622 / JCM 12645 / Bem) (Geobacter bemidjiensis).